The sequence spans 431 residues: Histidine--tRNA ligase (431 aa).

This sequence belongs to the class-II aminoacyl-tRNA synthetase family. In terms of assembly, homodimer.

The protein localises to the cytoplasm. The catalysed reaction is tRNA(His) + L-histidine + ATP = L-histidyl-tRNA(His) + AMP + diphosphate + H(+). This chain is Histidine--tRNA ligase, found in Levilactobacillus brevis (strain ATCC 367 / BCRC 12310 / CIP 105137 / JCM 1170 / LMG 11437 / NCIMB 947 / NCTC 947) (Lactobacillus brevis).